Here is a 240-residue protein sequence, read N- to C-terminus: Ribonuclease HII (240 aa).

An RNase H type-2 domain is found at 21 to 210 (GLVAGVDEAG…VAAAVQRTVV (190 aa)). Positions 27, 28, and 119 each coordinate a divalent metal cation.

The protein belongs to the RNase HII family. It depends on Mn(2+) as a cofactor. Requires Mg(2+) as cofactor.

Its subcellular location is the cytoplasm. The enzyme catalyses Endonucleolytic cleavage to 5'-phosphomonoester.. Functionally, endonuclease that specifically degrades the RNA of RNA-DNA hybrids. In Paracidovorax citrulli (strain AAC00-1) (Acidovorax citrulli), this protein is Ribonuclease HII.